Reading from the N-terminus, the 57-residue chain is UPF0391 membrane protein RPA3505 (57 aa).

A run of 2 helical transmembrane segments spans residues 4-24 (WVVT…GGIA) and 30-50 (IAKI…VISI).

Belongs to the UPF0391 family.

The protein localises to the cell membrane. This Rhodopseudomonas palustris (strain ATCC BAA-98 / CGA009) protein is UPF0391 membrane protein RPA3505.